The primary structure comprises 533 residues: MTKKRIAVIGGGVSGLSSIKCCLEEGLEPVCFERSADIGGLWRFQENPEEGRASIYKSVIINTSKEMMCFSDYPIPDHYPNFMHNSHVLEYFRMYAKEFGLLKYIQFKTTVCNVKKRPDFSTSGQWEVVTEHEGKTKVDVFDAVMVCTGHHTNAHLPLESFPGIEKFKGQYFHSRDYKNPEAFTGKRVVIIGIGNSGGDLAVEISHTAKQVFLSTRRGSWILNRVGKHGYPTDVLLSSRFTYFLSKILGQSLSNAYVEKQMNERFDHEMFGLKPKHRAMSQHPTVNDDLPNRIIAGMVKVKGNVKEFTETAAIFEDGSREDDIDAVIFATGYSFDFPFLEDSVKVVKNKVSLYKKVFPPNLERPTLAIIGLIQPLGAIMPISELQGRWAVQVFKGLKTLPSQSEMMAEITKAQEEIAKRYVDSQRHTIQGDYIQTMEEIAEFVGVKPNLLSLAFTDPKLALKLFFGPCTPIHYRLQGPGKWHGARKAILTTYDRIRKPLNTRETEKSNSMVSAVTTGCFMLAVVFFAIIMAYA.

Position 5 is a dimethylated arginine (R5). FAD is bound by residues 10–14 (GGGVS), E33, and 41–42 (LW). At S54 the chain carries Phosphoserine. Y56 carries the phosphotyrosine modification. Residue S58 is modified to Phosphoserine. 62 to 63 (NT) lines the FAD pocket. Residue 196–199 (SGGD) coordinates NADP(+). S280 carries the phosphoserine modification. The residue at position 284 (T284) is a Phosphothreonine. S401 carries the phosphoserine modification. The chain crosses the membrane as a helical span at residues 510-530 (MVSAVTTGCFMLAVVFFAIIM).

It belongs to the FMO family. FAD is required as a cofactor. As to expression, expressed in liver.

The protein resides in the microsome membrane. Its subcellular location is the endoplasmic reticulum membrane. The catalysed reaction is N,N-dimethylaniline + NADPH + O2 + H(+) = N,N-dimethylaniline N-oxide + NADP(+) + H2O. It carries out the reaction NADPH + O2 + H(+) = H2O2 + NADP(+). The enzyme catalyses heptan-2-one + NADPH + O2 + H(+) = pentyl acetate + NADP(+) + H2O. It catalyses the reaction octan-3-one + NADPH + O2 + H(+) = pentyl propanoate + NADP(+) + H2O. The catalysed reaction is octan-3-one + NADPH + O2 + H(+) = ethyl hexanoate + NADP(+) + H2O. It carries out the reaction hexan-3-one + NADPH + O2 + H(+) = ethyl butanoate + NADP(+) + H2O. The enzyme catalyses hexan-3-one + NADPH + O2 + H(+) = propyl propanoate + NADP(+) + H2O. It catalyses the reaction heptan-4-one + NADPH + O2 + H(+) = propyl butanoate + NADP(+) + H2O. The catalysed reaction is (2E)-geranial + NADPH + O2 + H(+) = (1E)-2,6-dimethylhepta-1,5-dien-1-yl formate + NADP(+) + H2O. It carries out the reaction sulcatone + NADPH + O2 + H(+) = 4-methylpent-3-en-1-yl acetate + NADP(+) + H2O. Its function is as follows. Acts as a Baeyer-Villiger monooxygenase on a broad range of substrates. Catalyzes the insertion of an oxygen atom into a carbon-carbon bond adjacent to a carbonyl, which converts ketones to esters. Active on diverse carbonyl compounds, whereas soft nucleophiles are mostly non- or poorly reactive. In contrast with other forms of FMO it is non- or poorly active on 'classical' substrates such as drugs, pesticides, and dietary components containing soft nucleophilic heteroatoms. Able to oxidize drug molecules bearing a carbonyl group on an aliphatic chain, such as nabumetone and pentoxifylline. Also, in the absence of substrates, shows slow but yet significant NADPH oxidase activity. Acts as a positive modulator of cholesterol biosynthesis as well as glucose homeostasis, promoting metabolic aging via pleiotropic effects. This is Flavin-containing monooxygenase 5 (FMO5) from Cavia porcellus (Guinea pig).